The sequence spans 310 residues: NADP-dependent D-sorbitol-6-phosphate dehydrogenase (310 aa).

Catalysis depends on Tyr48, which acts as the Proton donor. Residue His108 participates in substrate binding. 210–272 (TPLGGAAANK…SSKIQRLKEN (63 aa)) serves as a coordination point for NADP(+).

The protein belongs to the aldo/keto reductase family.

The catalysed reaction is D-sorbitol 6-phosphate + NADP(+) = aldehydo-D-glucose 6-phosphate + NADPH + H(+). In terms of biological role, synthesizes sorbitol-6-phosphate, a key intermediate in the synthesis of sorbitol which is a major photosynthetic product in many members of the Rosaceae family. This Malus domestica (Apple) protein is NADP-dependent D-sorbitol-6-phosphate dehydrogenase (S6PDH).